Consider the following 284-residue polypeptide: Aspartate dehydrogenase domain-containing protein (284 aa).

Belongs to the L-aspartate dehydrogenase family.

In Xenopus tropicalis (Western clawed frog), this protein is Aspartate dehydrogenase domain-containing protein (aspdh).